Consider the following 276-residue polypeptide: Probable endonuclease 4 (276 aa).

Zn(2+) contacts are provided by histidine 67, histidine 107, glutamate 142, aspartate 176, histidine 179, histidine 211, aspartate 224, histidine 226, and glutamate 256.

Belongs to the AP endonuclease 2 family. Zn(2+) serves as cofactor.

It carries out the reaction Endonucleolytic cleavage to 5'-phosphooligonucleotide end-products.. In terms of biological role, endonuclease IV plays a role in DNA repair. It cleaves phosphodiester bonds at apurinic or apyrimidinic (AP) sites, generating a 3'-hydroxyl group and a 5'-terminal sugar phosphate. The chain is Probable endonuclease 4 from Methanosphaera stadtmanae (strain ATCC 43021 / DSM 3091 / JCM 11832 / MCB-3).